A 261-amino-acid polypeptide reads, in one-letter code: Arcelin-5A (261 aa).

Positions 1-21 (MASSKLLSLALFLVLLTHANS) are cleaved as a signal peptide. N43, N91, and N100 each carry an N-linked (GlcNAc...) asparagine glycan. Cysteines 167 and 203 form a disulfide. A propeptide spanning residues 255 to 261 (ILLNNIL) is cleaved from the precursor.

It belongs to the leguminous lectin family. As to quaternary structure, monomer. Post-translationally, the C-terminal segment appears to be highly susceptible to proteolysis.

Seed storage. This carbohydrate-binding lectin has toxic effects on bean bruchid pests. The polypeptide is Arcelin-5A (ARC5A) (Phaseolus vulgaris (Kidney bean)).